Consider the following 96-residue polypeptide: Complement inhibitor RaCI4 (96 aa).

The signal sequence occupies residues 1-24; sequence MSAFNIFALVVVVCALMINECCTS. Cystine bridges form between Cys-37-Cys-61, Cys-42-Cys-63, and Cys-57-Cys-78.

Belongs to the RaCI family. Expressed in salivary glands.

The protein resides in the secreted. Its function is as follows. Complement inhibitor. Prevents complement-mediated C5 activation by binding to C5. Binds C5 at a different binding site than the other tick complement inhibitors OmCI and CirpT1, and the drug eculizumab. Inhibits complement in human and guinea pig but not in other species tested (rabbit, rat, mouse, and pig). In Hyalomma rufipes (Tick), this protein is Complement inhibitor RaCI4.